The primary structure comprises 86 residues: Small ribosomal subunit protein uS17 (86 aa).

The protein belongs to the universal ribosomal protein uS17 family. Part of the 30S ribosomal subunit.

In terms of biological role, one of the primary rRNA binding proteins, it binds specifically to the 5'-end of 16S ribosomal RNA. The chain is Small ribosomal subunit protein uS17 from Halalkalibacterium halodurans (strain ATCC BAA-125 / DSM 18197 / FERM 7344 / JCM 9153 / C-125) (Bacillus halodurans).